Here is an 858-residue protein sequence, read N- to C-terminus: Polyhomeotic-like protein 2 (858 aa).

Disordered stretches follow at residues M1–Q76, Q230–R307, P337–Q388, L407–P444, K473–Q493, and T529–Q561. Composition is skewed to low complexity over residues T10–S34 and Q230–T241. The tract at residues S33–D53 is interaction with BMI1. Polar residues predominate over residues P265–A274. Over residues P337–Q358 the composition is skewed to low complexity. Positions A379–Q388 are enriched in polar residues. Residues K473–P483 are compositionally biased toward basic and acidic residues. The segment covering T537–A551 has biased composition (low complexity). Positions K558–V587 match the HD1 motif. Residues K598 and K600 each participate in a glycyl lysine isopeptide (Lys-Gly) (interchain with G-Cter in SUMO2) cross-link. At T619 the chain carries Phosphothreonine. S621 is modified (phosphoserine). Residue K632 forms a Glycyl lysine isopeptide (Lys-Gly) (interchain with G-Cter in SUMO2) linkage. The FCS-type zinc finger occupies E633–K667. Zn(2+) is bound by residues C642, C645, C661, and C665. 2 disordered regions span residues Q688–V720 and H732–D768. K702 is covalently cross-linked (Glycyl lysine isopeptide (Lys-Gly) (interchain with G-Cter in SUMO2)). S751 carries the phosphoserine modification. One can recognise an SAM domain in the interval W794–S858. K847 is covalently cross-linked (Glycyl lysine isopeptide (Lys-Gly) (interchain with G-Cter in SUMO2)).

In terms of assembly, component of a PRC1-like complex. Interacts with CBX4. Interacts with BMI1, PCGF2, PHC1 and RNF2. Interacts with CHTOP. Interacts with the N-terminal region of the SP1 transcription factor and with MAPKAPK2. Interacts with SAMD7 and SAMD11.

The protein resides in the nucleus. Component of a Polycomb group (PcG) multiprotein PRC1-like complex, a complex class required to maintain the transcriptionally repressive state of many genes, including Hox genes, throughout development. PcG PRC1 complex acts via chromatin remodeling and modification of histones; it mediates monoubiquitination of histone H2A 'Lys-119', rendering chromatin heritably changed in its expressibility. This chain is Polyhomeotic-like protein 2 (PHC2), found in Homo sapiens (Human).